Reading from the N-terminus, the 338-residue chain is Aspartate carbamoyltransferase catalytic subunit (338 aa).

Carbamoyl phosphate is bound by residues R72 and T73. An L-aspartate-binding site is contributed by K100. R122, H152, and Q155 together coordinate carbamoyl phosphate. L-aspartate-binding residues include R186 and R243. Carbamoyl phosphate is bound by residues G284 and P285.

This sequence belongs to the aspartate/ornithine carbamoyltransferase superfamily. ATCase family. As to quaternary structure, heterododecamer (2C3:3R2) of six catalytic PyrB chains organized as two trimers (C3), and six regulatory PyrI chains organized as three dimers (R2).

It catalyses the reaction carbamoyl phosphate + L-aspartate = N-carbamoyl-L-aspartate + phosphate + H(+). The protein operates within pyrimidine metabolism; UMP biosynthesis via de novo pathway; (S)-dihydroorotate from bicarbonate: step 2/3. Catalyzes the condensation of carbamoyl phosphate and aspartate to form carbamoyl aspartate and inorganic phosphate, the committed step in the de novo pyrimidine nucleotide biosynthesis pathway. The sequence is that of Aspartate carbamoyltransferase catalytic subunit from Acinetobacter baylyi (strain ATCC 33305 / BD413 / ADP1).